The primary structure comprises 295 residues: Phosphatidylserine decarboxylase proenzyme (295 aa).

Residues Asp113, His169, and Ser256 each act as charge relay system; for autoendoproteolytic cleavage activity in the active site. Catalysis depends on Ser256, which acts as the Schiff-base intermediate with substrate; via pyruvic acid; for decarboxylase activity. Ser256 bears the Pyruvic acid (Ser); by autocatalysis mark.

The protein belongs to the phosphatidylserine decarboxylase family. PSD-B subfamily. Prokaryotic type II sub-subfamily. As to quaternary structure, heterodimer of a large membrane-associated beta subunit and a small pyruvoyl-containing alpha subunit. The cofactor is pyruvate. Post-translationally, is synthesized initially as an inactive proenzyme. Formation of the active enzyme involves a self-maturation process in which the active site pyruvoyl group is generated from an internal serine residue via an autocatalytic post-translational modification. Two non-identical subunits are generated from the proenzyme in this reaction, and the pyruvate is formed at the N-terminus of the alpha chain, which is derived from the carboxyl end of the proenzyme. The autoendoproteolytic cleavage occurs by a canonical serine protease mechanism, in which the side chain hydroxyl group of the serine supplies its oxygen atom to form the C-terminus of the beta chain, while the remainder of the serine residue undergoes an oxidative deamination to produce ammonia and the pyruvoyl prosthetic group on the alpha chain. During this reaction, the Ser that is part of the protease active site of the proenzyme becomes the pyruvoyl prosthetic group, which constitutes an essential element of the active site of the mature decarboxylase.

The protein localises to the cell membrane. The catalysed reaction is a 1,2-diacyl-sn-glycero-3-phospho-L-serine + H(+) = a 1,2-diacyl-sn-glycero-3-phosphoethanolamine + CO2. It participates in phospholipid metabolism; phosphatidylethanolamine biosynthesis; phosphatidylethanolamine from CDP-diacylglycerol: step 2/2. Catalyzes the formation of phosphatidylethanolamine (PtdEtn) from phosphatidylserine (PtdSer). This is Phosphatidylserine decarboxylase proenzyme from Clostridium botulinum (strain Kyoto / Type A2).